Here is a 633-residue protein sequence, read N- to C-terminus: Protein BZZ1 (633 aa).

The F-BAR domain maps to 5–271 (LSIGNEIKDS…VVKQNKPSLN (267 aa)). A coiled-coil region spans residues 138–210 (DMVNKKDNIY…INQANRTKDK (73 aa)). S327, S463, S472, and S476 each carry phosphoserine. Residues 429-495 (VDSKPSSGGS…KKTTQNSSDD (67 aa)) form a disordered region. A compositionally biased stretch (low complexity) spans 474–493 (NNSIRTTSTNNTKKTTQNSS). 2 SH3 domains span residues 493–555 (SDDG…ISSA) and 577–633 (LPVR…SYCK).

Belongs to the BZZ1 family. As to quaternary structure, interacts with LAS17 and MYO5.

It localises to the cytoplasm. The protein localises to the cytoskeleton. The protein resides in the actin patch. Its function is as follows. Plays a role in endocytosis and trafficking to the vacuole. Functions with type I myosins to restore polarity of the actin cytoskeleton after NaCl stress. In Saccharomyces cerevisiae (strain ATCC 204508 / S288c) (Baker's yeast), this protein is Protein BZZ1 (BZZ1).